We begin with the raw amino-acid sequence, 360 residues long: Cannabinoid receptor 2 (360 aa).

Residues 1–33 (MEECWVTEIANGSKDGLDSNPMKDYMILSGPQK) are Extracellular-facing. The N-linked (GlcNAc...) asparagine glycan is linked to asparagine 11. The chain crosses the membrane as a helical span at residues 34-59 (TAVAVLCTLLGLLSALENVAVLYLIL). Residues 60 to 71 (SSHQLRRKPSYL) lie on the Cytoplasmic side of the membrane. A helical transmembrane segment spans residues 72 to 92 (FIGSLAGADFLASVVFACSFV). At 93 to 104 (NFHVFHGVDSKA) the chain is on the extracellular side. A helical transmembrane segment spans residues 105 to 129 (VFLLKIGSVTMTFTASVGSLLLTAI). Topologically, residues 130-149 (DRYLCLRYPPSYKALLTRGR) are cytoplasmic. The chain crosses the membrane as a helical span at residues 150–172 (ALVTLGIMWVLSALVSYLPLMGW). Residues 173 to 188 (TCCPRPCSELFPLIPN) lie on the Extracellular side of the membrane. Residues 189-214 (DYLLSWLLFIAFLFSGIIYTYGHVLW) traverse the membrane as a helical segment. Over 215-246 (KAHQHVASLSGHQDRQVPGMARMRLDVRLAKT) the chain is Cytoplasmic. The chain crosses the membrane as a helical span at residues 247 to 267 (LGLVLAVLLICWFPVLALMAH). Residues 268 to 279 (SLATTLSDQVKK) are Extracellular-facing. A helical transmembrane segment spans residues 280 to 301 (AFAFCSMLCLINSMVNPVIYAL). Topologically, residues 302–360 (RSGEIRSSAHHCLAHWKKCVRGLGSEAKEEAPRSSVTETEADGKITPWPDSRDLDLSDC) are cytoplasmic. Positions 327 to 360 (EAKEEAPRSSVTETEADGKITPWPDSRDLDLSDC) are disordered. A phosphoserine mark is found at serine 335 and serine 336. Residue threonine 338 is modified to Phosphothreonine. The segment covering 351–360 (DSRDLDLSDC) has biased composition (basic and acidic residues). Serine 352 carries the phosphoserine modification.

This sequence belongs to the G-protein coupled receptor 1 family. Constitutively phosphorylated on Ser-352; phosphorylation increases cell internalization and desensitizes the receptor. Preferentially expressed in cells of the immune system with higher expression in B-cells and NK cells (at protein level). Expressed in skin in suprabasal layers and hair follicles (at protein level). Highly expressed in tonsil and to a lower extent in spleen, peripheral blood mononuclear cells, and thymus. PubMed:14657172 could not detect expression in normal brain. Expressed in brain by perivascular microglial cells and dorsal root ganglion sensory neurons (at protein level). Two isoforms are produced by alternative promoter usage and differ only in the 5' UTR: isoform CB2A is observed predominantly in testis with some expression in brain, while isoform CB2B is predominant in spleen and leukocytes.

It localises to the cell membrane. The protein localises to the cell projection. The protein resides in the dendrite. Its subcellular location is the perikaryon. Heterotrimeric G protein-coupled receptor for endocannabinoid 2-arachidonoylglycerol mediating inhibition of adenylate cyclase. May function in inflammatory response, nociceptive transmission and bone homeostasis. This chain is Cannabinoid receptor 2 (CNR2), found in Homo sapiens (Human).